We begin with the raw amino-acid sequence, 113 residues long: uncharacterized protein (113 aa).

Its subcellular location is the mitochondrion. This is an uncharacterized protein from Arabidopsis thaliana (Mouse-ear cress).